The following is a 505-amino-acid chain: Peroxisome proliferator-activated receptor gamma (505 aa).

A glycan (O-linked (GlcNAc) threonine) is linked at threonine 84. Phosphoserine is present on serine 112. The nuclear receptor DNA-binding region spans 136-210 (AIECRVCGDK…VGMSHNAIRF (75 aa)). 2 NR C4-type zinc fingers span residues 139–159 (CRVC…CEGC) and 176–198 (CDLN…FQKC). The interval 205 to 280 (HNAIRFGRMP…DKSPFVIYDM (76 aa)) is interaction with FAM120B. One can recognise an NR LBD domain in the interval 238-503 (DLRALAKHLY…HPLLQEIYKD (266 aa)). A Glycyl lysine isopeptide (Lys-Gly) (interchain with G-Cter in ubiquitin) cross-link involves residue lysine 252. Rosiglitazone contacts are provided by residues 314 to 317 (QFRS), histidine 351, histidine 477, and tyrosine 501. The 9aaTAD motif lies at 495–503 (PLLQEIYKD).

This sequence belongs to the nuclear hormone receptor family. NR1 subfamily. Interacts with FOXO1 (acetylated form). Heterodimer with other nuclear receptors, such as RXRA. The heterodimer with the retinoic acid receptor RXRA is called adipocyte-specific transcription factor ARF6. Interacts with NCOA6 coactivator, leading to a strong increase in transcription of target genes. Interacts with coactivator PPARBP, leading to a mild increase in transcription of target genes. Interacts with NOCA7 in a ligand-inducible manner. Interacts with NCOA1 and NCOA2 LXXLL motifs. Interacts with ASXL1, ASXL2, DNTTIP2, FAM120B, MAP2K1/MEK1, NR0B2, PDPK1, PRDM16, PRMT2 and TGFB1I1. Interacts (when activated by agonist) with PPP5C. Interacts with HELZ2 and THRAP3; the interaction stimulates the transcriptional activity of PPARG. Interacts with PER2, the interaction is ligand dependent and blocks PPARG recruitment to target promoters. Interacts with NOCT. Interacts with ACTN4. Interacts (when in the liganded conformation) with GPS2. Interacts with CRY1 and CRY2 in a ligand-dependent manner. In the absence of hormonal ligand, interacts with TACC1. In macrophages, interacts with PAQR3 and STUB1; the interactions promote PPARG poylubiquitination and STUB1-mediated degradation. In terms of processing, O-GlcNAcylation at Thr-84 reduces transcriptional activity in adipocytes. Post-translationally, phosphorylated in basal conditions and dephosphorylated when treated with the ligand. May be dephosphorylated by PPP5C. The phosphorylated form may be inactive and dephosphorylation at Ser-112 induces adipogenic activity. Ubiquitinated by E3 ubiquitin-protein ligase complex containing FBXO9; leading to proteasomal degradation. Ubiquitinated at Lys-252 by TRIM55 leading to proteasomal degradation. Ubiquitinated by E3 ubiquitin-protein ligase STUB1/CHIP; leading to proteasomal degradation. In terms of tissue distribution, highest expression in adipose tissue. Lower in skeletal muscle, spleen, heart and liver. Also detectable in placenta, lung and ovary.

Its subcellular location is the nucleus. It localises to the cytoplasm. With respect to regulation, PDPK1 activates its transcriptional activity independently of its kinase activity. Functionally, nuclear receptor that binds peroxisome proliferators such as hypolipidemic drugs and fatty acids. Once activated by a ligand, the nuclear receptor binds to DNA specific PPAR response elements (PPRE) and modulates the transcription of its target genes, such as acyl-CoA oxidase. It therefore controls the peroxisomal beta-oxidation pathway of fatty acids. Key regulator of adipocyte differentiation and glucose homeostasis. ARF6 acts as a key regulator of the tissue-specific adipocyte P2 (aP2) enhancer. Acts as a critical regulator of gut homeostasis by suppressing NF-kappa-B-mediated pro-inflammatory responses. Plays a role in the regulation of cardiovascular circadian rhythms by regulating the transcription of BMAL1 in the blood vessels. Its function is as follows. (Microbial infection) Upon treatment with M.tuberculosis or its lipoprotein LpqH, phosphorylation of MAPK p38 and IL-6 production are modulated, probably via this protein. This Homo sapiens (Human) protein is Peroxisome proliferator-activated receptor gamma (PPARG).